The primary structure comprises 1323 residues: Traf2 and NCK-interacting protein kinase (1323 aa).

One can recognise a Protein kinase domain in the interval 25–289 (FELVELVGNG…TEQLMKHPFI (265 aa)). Residues 31 to 39 (VGNGTYGQV) and lysine 54 each bind ATP. Aspartate 153 acts as the Proton acceptor in catalysis. A Phosphothreonine modification is found at threonine 187. Disordered stretches follow at residues 284–347 (MKHP…LPGE), 397–559 (EQKE…LRPV), and 571–838 (SQGP…NEQY). A compositionally biased stretch (basic and acidic residues) spans 288–307 (FIRDQPNERQVRIQLKDHID). The mediates interaction with NEDD4 stretch occupies residues 290–1010 (RDQPNERQVR…EIRKYKKRFN (721 aa)). The span at 317–335 (DETEYEYSGSEEEEEENDS) shows a compositional bias: acidic residues. Phosphoserine is present on residues serine 324 and serine 326. Basic and acidic residues-rich tracts occupy residues 397–470 (EQKE…ERDY), 477–494 (QRQE…HYKE), and 503–513 (AWAKEVEERSR). A phosphoserine mark is found at serine 531 and serine 541. Threonine 552 is subject to Phosphothreonine. Serine 571, serine 579, serine 581, and serine 611 each carry phosphoserine. Positions 623–640 (RIEKFDRSSWLRQEEDIP) are enriched in basic and acidic residues. Residues serine 649, serine 651, serine 659, serine 672, serine 678, serine 691, serine 735, serine 737, and serine 740 each carry the phosphoserine modification. Over residues 691-726 (SSLQRTSSGSSSSSSTPSSQPSSQGGSQPGSQAGSS) the composition is skewed to low complexity. 2 stretches are compositionally biased toward basic and acidic residues: residues 746-760 (EPSK…DITR) and 772-790 (KELR…KKVT). Over residues 797–810 (EESESSEEEEEDGE) the composition is skewed to acidic residues. Serine 922 is subject to Phosphoserine. The segment at 939-960 (FVDPRVYQTSPTDEDEEDDESS) is disordered. Acidic residues predominate over residues 950–959 (TDEDEEDDES). The region spanning 1010–1297 (NSEILCAALW…KFLCERNDKV (288 aa)) is the CNH domain.

It belongs to the protein kinase superfamily. STE Ser/Thr protein kinase family. STE20 subfamily. As to quaternary structure, interacts (via the CNH domain) with RAP2A (GTP-bound form preferentially); the interaction is direct and required for the activation of TNIK by RAP2A. Interacts with NEDD4; recruits RAP2A to NEDD4. Interacts with TRAF2 and NCK. Interacts with TCF7L2/TCF4 and CTNNB1; the interaction is direct. Interacts with TANC1. Autophosphorylated. Autophosphorylation is activated by RAP2A and induces association to the cytoskeletal fraction.

Its subcellular location is the nucleus. The protein localises to the cytoplasm. The protein resides in the recycling endosome. It localises to the cytoskeleton. It catalyses the reaction L-seryl-[protein] + ATP = O-phospho-L-seryl-[protein] + ADP + H(+). The catalysed reaction is L-threonyl-[protein] + ATP = O-phospho-L-threonyl-[protein] + ADP + H(+). In terms of biological role, serine/threonine kinase that acts as an essential activator of the Wnt signaling pathway. Recruited to promoters of Wnt target genes and required to activate their expression. May act by phosphorylating TCF4/TCF7L2. Appears to act upstream of the JUN N-terminal pathway. May play a role in the response to environmental stress. Part of a signaling complex composed of NEDD4, RAP2A and TNIK which regulates neuronal dendrite extension and arborization during development. More generally, it may play a role in cytoskeletal rearrangements and regulate cell spreading. Phosphorylates SMAD1 on Thr-322. Activator of the Hippo signaling pathway which plays a pivotal role in organ size control and tumor suppression by restricting proliferation and promoting apoptosis. MAP4Ks act in parallel to and are partially redundant with STK3/MST2 and STK4/MST2 in the phosphorylation and activation of LATS1/2, and establish MAP4Ks as components of the expanded Hippo pathway. This Mus musculus (Mouse) protein is Traf2 and NCK-interacting protein kinase (Tnik).